A 281-amino-acid polypeptide reads, in one-letter code: Fibrinogen-like protein 1-like protein (281 aa).

The signal sequence occupies residues 1–33; the sequence is MGLQAGTRQLHGNLILLPVAVVMLLLCTSPVCA. Residues 34 to 246 form the Fibrinogen C-terminal domain; it reads TASVGLPADC…RPSSWSNPPM (213 aa). Disulfide bonds link Cys43-Cys69 and Cys201-Cys213. Over residues 260–269 the composition is skewed to low complexity; it reads PSRSPSLPSP. Positions 260–281 are disordered; sequence PSRSPSLPSPITATHTVRNQLQ. A compositionally biased stretch (polar residues) spans 270–281; the sequence is ITATHTVRNQLQ.

In terms of tissue distribution, expressed in smal intestine, colon and lung.

Functionally, shows a cytidine deaminase activity on 2'-deoxycytidine (in vitro), however shows no RNA editing activity (in vitro). The protein is Fibrinogen-like protein 1-like protein of Gallus gallus (Chicken).